Here is a 545-residue protein sequence, read N- to C-terminus: Methionine--tRNA ligase (545 aa).

The 'HIGH' region signature appears at 13-23 (PYANGEIHLGH). Zn(2+)-binding residues include Cys-144, Cys-147, Cys-157, and Cys-160. The 'KMSKS' region signature appears at 329–333 (KMSKS). Residue Lys-332 participates in ATP binding.

The protein belongs to the class-I aminoacyl-tRNA synthetase family. MetG type 1 subfamily. Monomer. It depends on Zn(2+) as a cofactor.

The protein resides in the cytoplasm. The catalysed reaction is tRNA(Met) + L-methionine + ATP = L-methionyl-tRNA(Met) + AMP + diphosphate. Is required not only for elongation of protein synthesis but also for the initiation of all mRNA translation through initiator tRNA(fMet) aminoacylation. The polypeptide is Methionine--tRNA ligase (Vesicomyosocius okutanii subsp. Calyptogena okutanii (strain HA)).